A 269-amino-acid polypeptide reads, in one-letter code: 4-hydroxy-tetrahydrodipicolinate reductase (269 aa).

NAD(+)-binding positions include 11–16 (GASGRM) and glutamate 37. Arginine 38 lines the NADP(+) pocket. NAD(+)-binding positions include 101 to 103 (GTT) and 125 to 128 (AGNM). Histidine 158 functions as the Proton donor/acceptor in the catalytic mechanism. Histidine 159 serves as a coordination point for (S)-2,3,4,5-tetrahydrodipicolinate. Lysine 162 serves as the catalytic Proton donor. 168–169 (GT) provides a ligand contact to (S)-2,3,4,5-tetrahydrodipicolinate.

Belongs to the DapB family.

It is found in the cytoplasm. The catalysed reaction is (S)-2,3,4,5-tetrahydrodipicolinate + NAD(+) + H2O = (2S,4S)-4-hydroxy-2,3,4,5-tetrahydrodipicolinate + NADH + H(+). It carries out the reaction (S)-2,3,4,5-tetrahydrodipicolinate + NADP(+) + H2O = (2S,4S)-4-hydroxy-2,3,4,5-tetrahydrodipicolinate + NADPH + H(+). The protein operates within amino-acid biosynthesis; L-lysine biosynthesis via DAP pathway; (S)-tetrahydrodipicolinate from L-aspartate: step 4/4. Its function is as follows. Catalyzes the conversion of 4-hydroxy-tetrahydrodipicolinate (HTPA) to tetrahydrodipicolinate. This Cereibacter sphaeroides (strain ATCC 17023 / DSM 158 / JCM 6121 / CCUG 31486 / LMG 2827 / NBRC 12203 / NCIMB 8253 / ATH 2.4.1.) (Rhodobacter sphaeroides) protein is 4-hydroxy-tetrahydrodipicolinate reductase.